The sequence spans 240 residues: HTH-type transcriptional regulator Mce2R (240 aa).

One can recognise an HTH gntR-type domain in the interval 9–77; sequence RSVPEEVFEQ…QGDVTTVRDF (69 aa). A DNA-binding region (H-T-H motif) is located at residues 37-56; sequence ERRLAELLGVSRPAVREALK.

In terms of biological role, negatively regulates the expression of its operon as well as expression of end (endonuclease 4). The sequence is that of HTH-type transcriptional regulator Mce2R (mce2R) from Mycobacterium tuberculosis (strain CDC 1551 / Oshkosh).